The primary structure comprises 29 residues: Small toxic protein TisB (29 aa).

Residues 6–28 (IAILILKLIVAALQLLDAVLKYL) form a helical membrane-spanning segment.

It is found in the cell inner membrane. In terms of biological role, toxic component of a type I toxin-antitoxin (TA) system. Overexpression causes cessation of growth, induces stress-response, a number of membrane protein genes, and leads to cell death. Inhibits ATP synthesis, ATP levels drop drastically quickly after induction. Part of the programmed response to DNA damage; damage leads to increased accumulation of the protein which slows or stops bacterial growth, probably allowing DNA repair before cells continue to grow. This chain is Small toxic protein TisB (tisB), found in Escherichia coli (strain K12).